Reading from the N-terminus, the 109-residue chain is RNA-binding protein Hfq (109 aa).

One can recognise a Sm domain in the interval 9–68 (DPFLNALRKEKVNVSVYLVNGIKLQGQVEAFDQFCIVLRNTVNQMVYKHAISTIVPAKSV). A disordered region spans residues 77-109 (PYHQNSNDEQDENVDDIHSDDLEIQENEGNIHE).

This sequence belongs to the Hfq family. As to quaternary structure, homohexamer.

Its function is as follows. RNA chaperone that binds small regulatory RNA (sRNAs) and mRNAs to facilitate mRNA translational regulation in response to envelope stress, environmental stress and changes in metabolite concentrations. Also binds with high specificity to tRNAs. The protein is RNA-binding protein Hfq of Francisella tularensis subsp. mediasiatica (strain FSC147).